We begin with the raw amino-acid sequence, 238 residues long: Probable transcriptional regulatory protein CHU_3516 (238 aa).

The protein belongs to the TACO1 family.

Its subcellular location is the cytoplasm. This chain is Probable transcriptional regulatory protein CHU_3516, found in Cytophaga hutchinsonii (strain ATCC 33406 / DSM 1761 / CIP 103989 / NBRC 15051 / NCIMB 9469 / D465).